Consider the following 261-residue polypeptide: Adenosylcobinamide-GDP ribazoletransferase (261 aa).

Helical transmembrane passes span 4 to 26, 40 to 60, 62 to 82, 110 to 130, 140 to 160, 197 to 217, and 237 to 257; these read GLNGLLLAFQFLTTVPITRQIPW, LTGLVLGGLLVSLYLLLSPFL, PLVLAALLVTLSIFYSGGLHL, VGAFAVMTTILLIGWKVLLLM, FTWLLLLVPVCLRWMIIVQLI, CFLLLQNVILTLCFLLMIWLF, and IGASIEGGELFLWGIMWTFFL.

The protein belongs to the CobS family. Requires Mg(2+) as cofactor.

The protein localises to the cell membrane. It carries out the reaction alpha-ribazole + adenosylcob(III)inamide-GDP = adenosylcob(III)alamin + GMP + H(+). The catalysed reaction is alpha-ribazole 5'-phosphate + adenosylcob(III)inamide-GDP = adenosylcob(III)alamin 5'-phosphate + GMP + H(+). The protein operates within cofactor biosynthesis; adenosylcobalamin biosynthesis; adenosylcobalamin from cob(II)yrinate a,c-diamide: step 7/7. Functionally, joins adenosylcobinamide-GDP and alpha-ribazole to generate adenosylcobalamin (Ado-cobalamin). Also synthesizes adenosylcobalamin 5'-phosphate from adenosylcobinamide-GDP and alpha-ribazole 5'-phosphate. The sequence is that of Adenosylcobinamide-GDP ribazoletransferase from Halalkalibacterium halodurans (strain ATCC BAA-125 / DSM 18197 / FERM 7344 / JCM 9153 / C-125) (Bacillus halodurans).